The following is an 811-amino-acid chain: Methionine--tRNA ligase (811 aa).

Positions 11–21 (PYVNNVPHLGN) match the 'HIGH' region motif. Zn(2+)-binding residues include Cys-142, Cys-145, Cys-155, and Cys-158. Positions 344 to 348 (KFSKS) match the 'KMSKS' region motif. Residue Lys-347 participates in ATP binding. The disordered stretch occupies residues 606-640 (GVSVPRTAQMPTGMNKKETDAQQKKEEREMPPPSD). The span at 620-635 (NKKETDAQQKKEEREM) shows a compositional bias: basic and acidic residues. Residues 648 to 753 (FSERVVLKVA…PWALPGERAT (106 aa)) enclose the tRNA-binding domain.

The protein belongs to the class-I aminoacyl-tRNA synthetase family. MetG type 1 subfamily. In terms of assembly, homodimer. Zn(2+) serves as cofactor.

It localises to the cytoplasm. The enzyme catalyses tRNA(Met) + L-methionine + ATP = L-methionyl-tRNA(Met) + AMP + diphosphate. In terms of biological role, is required not only for elongation of protein synthesis but also for the initiation of all mRNA translation through initiator tRNA(fMet) aminoacylation. This chain is Methionine--tRNA ligase, found in Treponema pallidum (strain Nichols).